We begin with the raw amino-acid sequence, 402 residues long: Baeyer-Villiger oxidase notM (402 aa).

It belongs to the questin oxidase family.

Functionally, baeyer-Villiger oxidase; part of the gene cluster that mediates the biosynthesis of notoamide, a fungal indole alkaloid that belongs to a family of natural products containing a characteristic bicyclo[2.2.2]diazaoctane core. The first step of notoamide biosynthesis involves coupling of L-proline and L-tryptophan by the bimodular NRPS notE, to produce cyclo-L-tryptophan-L-proline called brevianamide F. The reverse prenyltransferase notF then acts as a deoxybrevianamide E synthase and converts brevianamide F to deoxybrevianamide E via reverse prenylation at C-2 of the indole ring leading to the bicyclo[2.2.2]diazaoctane core. Deoxybrevianamide E is further hydroxylated at C-6 of the indole ring, likely catalyzed by the cytochrome P450 monooxygenase notG, to yield 6-hydroxy-deoxybrevianamide E. 6-hydroxy-deoxybrevianamide E is a specific substrate of the prenyltransferase notC for normal prenylation at C-7 to produce 6-hydroxy-7-prenyl-deoxybrevianamide, also called notoamide S. As the proposed pivotal branching point in notoamide biosynthesis, notoamide S can be diverted to notoamide E through an oxidative pyran ring closure putatively catalyzed by either notH cytochrome P450 monooxygenase or the notD FAD-linked oxidoreductase. This step would be followed by an indole 2,3-epoxidation-initiated pinacol-like rearrangement catalyzed by the notB FAD-dependent monooxygenase leading to the formation of notoamide C and notoamide D. On the other hand notoamide S is converted to notoamide T by notH (or notD), a bifunctional oxidase that also functions as the intramolecular Diels-Alderase responsible for generation of (+)-notoamide T. To generate antipodal (-)-notoaminide T, notH' (or notD') in Aspergillus versicolor is expected to catalyze a Diels-Alder reaction leading to the opposite stereochemistry. The remaining oxidoreductase notD (or notH) likely catalyzes the oxidative pyran ring formation to yield (+)-stephacidin A. The FAD-dependent monooxygenase notI is highly similar to notB and is predicted to catalyze a similar conversion from (+)-stephacidin A to (-)-notoamide B via the 2,3-epoxidation of (+)-stephacidin A followed by a pinacol-type rearrangement. Finally, it remains unclear which enzyme could be responsible for the final hydroxylation steps leading to notoamide A and sclerotiamide. The function of notM in the notoamide biosynthesis has not been determined yet. In Aspergillus sp. (strain MF297-2), this protein is Baeyer-Villiger oxidase notM.